The primary structure comprises 594 residues: Protein HOTHEAD (594 aa).

The N-terminal stretch at 1 to 19 (MALKLFLFALLLCLPTSLS) is a signal peptide. Residue 64–91 (DYIVIGGGTAGCPLAATLSQNFSVLVLE) participates in FAD binding. Histidine 529 (proton acceptor) is an active-site residue.

It belongs to the GMC oxidoreductase family. Requires FAD as cofactor. Expressed in roots, leaves, stems, inflorescences and siliques. Found not only in epidermis but also in all sub-epidermal cell layers.

In terms of biological role, probable FAD-dependent enzyme. Involved in regulating post-genital organ fusion. Required to limit cellular interactions between contacting epidermal cells during floral development. This chain is Protein HOTHEAD (HTH), found in Arabidopsis thaliana (Mouse-ear cress).